Reading from the N-terminus, the 366-residue chain is 3-dehydroquinate synthase (366 aa).

NAD(+) contacts are provided by residues 69–74 (DGEAHK), 103–107 (GVIGD), 127–128 (TT), K140, K149, and 167–170 (TLNT). Positions 182, 245, and 262 each coordinate Zn(2+).

Belongs to the sugar phosphate cyclases superfamily. Dehydroquinate synthase family. Requires Co(2+) as cofactor. It depends on Zn(2+) as a cofactor. The cofactor is NAD(+).

It is found in the cytoplasm. It carries out the reaction 7-phospho-2-dehydro-3-deoxy-D-arabino-heptonate = 3-dehydroquinate + phosphate. It functions in the pathway metabolic intermediate biosynthesis; chorismate biosynthesis; chorismate from D-erythrose 4-phosphate and phosphoenolpyruvate: step 2/7. In terms of biological role, catalyzes the conversion of 3-deoxy-D-arabino-heptulosonate 7-phosphate (DAHP) to dehydroquinate (DHQ). This Pseudomonas fluorescens (strain SBW25) protein is 3-dehydroquinate synthase.